The chain runs to 616 residues: Dihydroxy-acid dehydratase (616 aa).

Asp81 provides a ligand contact to Mg(2+). Cys122 contacts [2Fe-2S] cluster. Mg(2+) is bound by residues Asp123 and Lys124. Position 124 is an N6-carboxylysine (Lys124). Residue Cys195 coordinates [2Fe-2S] cluster. Residue Glu491 coordinates Mg(2+). Catalysis depends on Ser517, which acts as the Proton acceptor.

This sequence belongs to the IlvD/Edd family. In terms of assembly, homodimer. The cofactor is [2Fe-2S] cluster. It depends on Mg(2+) as a cofactor.

The enzyme catalyses (2R)-2,3-dihydroxy-3-methylbutanoate = 3-methyl-2-oxobutanoate + H2O. It catalyses the reaction (2R,3R)-2,3-dihydroxy-3-methylpentanoate = (S)-3-methyl-2-oxopentanoate + H2O. The protein operates within amino-acid biosynthesis; L-isoleucine biosynthesis; L-isoleucine from 2-oxobutanoate: step 3/4. It functions in the pathway amino-acid biosynthesis; L-valine biosynthesis; L-valine from pyruvate: step 3/4. In terms of biological role, functions in the biosynthesis of branched-chain amino acids. Catalyzes the dehydration of (2R,3R)-2,3-dihydroxy-3-methylpentanoate (2,3-dihydroxy-3-methylvalerate) into 2-oxo-3-methylpentanoate (2-oxo-3-methylvalerate) and of (2R)-2,3-dihydroxy-3-methylbutanoate (2,3-dihydroxyisovalerate) into 2-oxo-3-methylbutanoate (2-oxoisovalerate), the penultimate precursor to L-isoleucine and L-valine, respectively. The sequence is that of Dihydroxy-acid dehydratase from Escherichia coli O1:K1 / APEC.